A 454-amino-acid polypeptide reads, in one-letter code: Cell division cycle-associated 7-like protein (454 aa).

An Integrase domain-binding motif 1 (IBM1) motif is present at residues 9–33 (IPKEVADIFNAPSDDEEFVGFRDDV). A Phosphoserine modification is found at Ser-21. Residues 65-91 (FTEELRRIFIEDTDSETEDFAGFTQSD) carry the Integrase domain-binding motif 2 (IBM2) motif. Residue Thr-77 is modified to Phosphothreonine. A Phosphoserine modification is found at Ser-79. Residues Thr-81 and Thr-88 each carry the phosphothreonine modification. 2 disordered regions span residues 103 to 169 (VESD…LFSS) and 188 to 213 (QVIQ…SSDA). A phosphoserine mark is found at Ser-105, Ser-108, Ser-117, Ser-138, Ser-139, Ser-162, Ser-195, and Ser-197. Positions 117–126 (SEEEEDEEED) are enriched in acidic residues. Residues 213 to 235 (ALLKRTMNIKENKAMLAQLLAEL) form an MYC-binding region. Residues Lys-222 and Lys-225 each participate in a glycyl lysine isopeptide (Lys-Gly) (interchain with G-Cter in SUMO2) cross-link. Ser-261 bears the Phosphoserine mark.

Interacts with MYC. Interacts (via IBM motifs) with PSIP1 (via IBD domain); phosphorylation increases its affinity for PSIP1. In terms of processing, phosphorylation increases its interaction with PSIP1. As to expression, ubiquitous. Overexpressed in medulloblastoma.

The protein localises to the cytoplasm. The protein resides in the nucleus. Plays a role in transcriptional regulation as a repressor that inhibits monoamine oxidase A (MAOA) activity and gene expression by binding to the promoter. Plays an important oncogenic role in mediating the full transforming effect of MYC in medulloblastoma cells. Involved in apoptotic signaling pathways; May act downstream of P38-kinase and BCL-2, but upstream of CASP3/caspase-3 as well as CCND1/cyclin D1 and E2F1. In Homo sapiens (Human), this protein is Cell division cycle-associated 7-like protein (CDCA7L).